We begin with the raw amino-acid sequence, 617 residues long: Dopamine beta-hydroxylase (617 aa).

Topologically, residues 1 to 16 are cytoplasmic; that stretch reads MPALSRWASLPGPSMR. Residues 17-37 traverse the membrane as a helical; Signal-anchor for type II membrane protein segment; that stretch reads EAAFMYSTAVAIFLVILVAAL. Topologically, residues 38–617 are intragranular; it reads QGSAPRESPL…TVVSIGGGKG (580 aa). The DOMON domain occupies 57–173; that stretch reads GSLELSWNVS…GTVHLVYGIL (117 aa). Asn64 is a glycosylation site (N-linked (GlcNAc...) asparagine). 6 disulfides stabilise this stretch: Cys154-Cys596, Cys232-Cys283, Cys269-Cys295, Cys390-Cys503, Cys394-Cys565, and Cys466-Cys488. Asn184 carries an N-linked (GlcNAc...) (complex) asparagine glycan. Tyr230 is a catalytic residue. Positions 262 and 263 each coordinate Cu(2+). His333 contributes to the Cu(2+) binding site. Residue Asn344 is glycosylated (N-linked (GlcNAc...) asparagine). His412 is a catalytic residue. The Cu(2+) site is built by His412, His414, and Met487. A glycan (N-linked (GlcNAc...) asparagine) is linked at Asn566. The tract at residues 590–617 is disordered; it reads EEPTPQCPTSQGRSPAGPTVVSIGGGKG.

It belongs to the copper type II ascorbate-dependent monooxygenase family. Homotetramer; composed of two disulfide-linked dimers. Cu(2+) is required as a cofactor. Post-translationally, N-glycosylated. In terms of processing, proteolytic cleavage after the membrane-anchor leads to the release of the soluble form.

It is found in the cytoplasmic vesicle. Its subcellular location is the secretory vesicle lumen. The protein localises to the secretory vesicle. The protein resides in the chromaffin granule lumen. It localises to the secreted. It is found in the secretory vesicle membrane. Its subcellular location is the chromaffin granule membrane. It catalyses the reaction dopamine + 2 L-ascorbate + O2 = (R)-noradrenaline + 2 monodehydro-L-ascorbate radical + H2O. It functions in the pathway catecholamine biosynthesis; (R)-noradrenaline biosynthesis; (R)-noradrenaline from dopamine: step 1/1. In terms of biological role, catalyzes the hydroxylation of dopamine to noradrenaline (also known as norepinephrine), and is thus vital for regulation of these neurotransmitters. This Homo sapiens (Human) protein is Dopamine beta-hydroxylase (DBH).